Here is a 375-residue protein sequence, read N- to C-terminus: 23S rRNA (uracil(747)-C(5))-methyltransferase RlmC (375 aa).

Cysteine 3, cysteine 11, cysteine 14, and cysteine 87 together coordinate [4Fe-4S] cluster. S-adenosyl-L-methionine contacts are provided by glutamine 212, phenylalanine 241, glutamate 262, and asparagine 307. The Nucleophile role is filled by cysteine 334.

The protein belongs to the class I-like SAM-binding methyltransferase superfamily. RNA M5U methyltransferase family. RlmC subfamily.

It carries out the reaction uridine(747) in 23S rRNA + S-adenosyl-L-methionine = 5-methyluridine(747) in 23S rRNA + S-adenosyl-L-homocysteine + H(+). Functionally, catalyzes the formation of 5-methyl-uridine at position 747 (m5U747) in 23S rRNA. This chain is 23S rRNA (uracil(747)-C(5))-methyltransferase RlmC, found in Shigella sonnei (strain Ss046).